We begin with the raw amino-acid sequence, 317 residues long: Secreted frizzled-related protein 5 (317 aa).

A signal peptide spans Met1–Cys29. The 118-residue stretch at Ser48–Val165 folds into the FZ domain. Intrachain disulfides connect Cys53–Cys116, Cys63–Cys109, Cys100–Cys135, Cys124–Cys162, Cys128–Cys152, Cys181–Cys253, Cys184–Cys255, and Cys198–Cys303. An NTR domain is found at Cys181–Cys303.

Belongs to the secreted frizzled-related protein (sFRP) family. As to expression, highly expressed in the retinal pigment epithelium (RPE) and pancreas. Weak expression in heart, liver and muscle.

The protein localises to the secreted. Functionally, soluble frizzled-related proteins (sFRPS) function as modulators of Wnt signaling through direct interaction with Wnts. They have a role in regulating cell growth and differentiation in specific cell types. SFRP5 may be involved in determining the polarity of photoreceptor, and perhaps, other cells in the retina. The chain is Secreted frizzled-related protein 5 (SFRP5) from Homo sapiens (Human).